The sequence spans 561 residues: Arf-GAP domain and FG repeat-containing protein 1 (561 aa).

The region spanning 11 to 135 (EKHLKMLRDM…WYVPPEQAKV (125 aa)) is the Arf-GAP domain. A C4-type zinc finger spans residues 29-52 (CFDCDQRGPTYVNMTVGSFVCTSC). Residue serine 167 is modified to Phosphoserine. The disordered stretch occupies residues 171 to 193 (LHLNKGTPTQSPVVGRSQGQQQE). The span at 176–191 (GTPTQSPVVGRSQGQQ) shows a compositional bias: polar residues. The residue at position 177 (threonine 177) is a Phosphothreonine. Phosphoserine is present on residues serine 181 and serine 362. The O-linked (GlcNAc) serine glycan is linked to serine 367. The segment at 409–451 (PVGASPQTQPASSGPAPFGATPSTNPFVAATGPSAASSTNPFQ) is disordered. Positions 442–451 (SAASSTNPFQ) are enriched in polar residues.

In terms of assembly, interacts with EPS15R and EPS15. Interacts with FCHO1. Post-translationally, O-glycosylated.

It localises to the nucleus. The protein localises to the cytoplasmic vesicle. Functionally, required for vesicle docking or fusion during acrosome biogenesis. May play a role in RNA trafficking or localization. This is Arf-GAP domain and FG repeat-containing protein 1 (Agfg1) from Rattus norvegicus (Rat).